Consider the following 127-residue polypeptide: Fluoride-specific ion channel FluC (127 aa).

The next 4 helical transmembrane spans lie at 7 to 27, 37 to 57, 69 to 89, and 102 to 122; these read LILISSGAALGASLRWGMGLI, FGTLIANYLGCFIIGLIMAMI, LFMITGFLGSLTTFSSFSAEV, and LGIMSAHLFGCLIFTGIGVLI. The Na(+) site is built by Gly-77 and Thr-80.

It belongs to the fluoride channel Fluc/FEX (TC 1.A.43) family.

The protein localises to the cell inner membrane. The catalysed reaction is fluoride(in) = fluoride(out). Na(+) is not transported, but it plays an essential structural role and its presence is essential for fluoride channel function. Functionally, fluoride-specific ion channel. Important for reducing fluoride concentration in the cell, thus reducing its toxicity. In Mannheimia succiniciproducens (strain KCTC 0769BP / MBEL55E), this protein is Fluoride-specific ion channel FluC.